A 147-amino-acid chain; its full sequence is Hemoglobin subunit beta (147 aa).

Residue Val2 is modified to N-acetylvaline. Residues 3–147 (HLTPEEKNAV…VANALAHKYH (145 aa)) enclose the Globin domain. Phosphothreonine is present on Thr13. Position 45 is a phosphoserine (Ser45). Lys60 carries the N6-acetyllysine modification. A heme b-binding site is contributed by His64. At Lys83 the chain carries N6-acetyllysine. His93 is a heme b binding site. Cys94 carries the post-translational modification S-nitrosocysteine. Lys145 carries the N6-acetyllysine modification.

It belongs to the globin family. In terms of assembly, heterotetramer of two alpha chains and two beta chains. In terms of tissue distribution, red blood cells.

In terms of biological role, involved in oxygen transport from the lung to the various peripheral tissues. The chain is Hemoglobin subunit beta (HBB) from Papio anubis (Olive baboon).